The sequence spans 232 residues: Nucleolar protein 16 (232 aa).

Positions 1 to 14 are enriched in basic residues; the sequence is MGRELQKRKKRSSR. Disordered regions lie at residues 1–20 and 113–161; these read MGRELQKRKKRSSRAKVQTH and RSDN…QSSR. Residues 132–154 show a composition bias toward basic and acidic residues; it reads EEPKPKNPTHDIEWHGISDDRQE.

Belongs to the NOP16 family. Component of the pre-66S ribosomal particle.

The protein resides in the nucleus. It is found in the nucleolus. Involved in the biogenesis of the 60S ribosomal subunit. The chain is Nucleolar protein 16 (nop-16) from Neurospora crassa (strain ATCC 24698 / 74-OR23-1A / CBS 708.71 / DSM 1257 / FGSC 987).